We begin with the raw amino-acid sequence, 1366 residues long: Agglutinin-like protein 6 (1366 aa).

Residues 1–18 form the signal peptide; sequence MKTVILLHLFFYCTIAMA. 4 disulfide bridges follow: Cys-74–Cys-151, Cys-97–Cys-113, Cys-206–Cys-301, and Cys-228–Cys-257. The N-linked (GlcNAc...) asparagine glycan is linked to Asn-294. ALS repeat units lie at residues 368-399, 404-435, 441-472, 477-508, 513-544, and 549-580; these read TTIT…VDVP, TTIT…VQVP, VTTT…IKEP, VTTT…VREP, and VTTT…IHDP. The tract at residues 449-470 is disordered; sequence GSVPTTETVTTGPQGTDSVIIK. A compositionally biased stretch (low complexity) spans 451–464; that stretch reads VPTTETVTTGPQGT. 3 disordered regions span residues 583-658, 758-780, and 804-833; these read ESSS…TSES, LSSD…FPHT, and VSLT…SDQS. The N-linked (GlcNAc...) asparagine glycan is linked to Asn-596. 2 stretches are compositionally biased toward low complexity: residues 758–775 and 805–833; these read LSSD…SPSD and SLTS…SDQS. An N-linked (GlcNAc...) asparagine glycan is attached at Asn-866. Disordered regions lie at residues 874–915, 928–976, 996–1040, 1081–1130, and 1158–1218; these read ESES…STVT, TGMP…TSAS, SETS…KESS, EDNE…VSSV, and ETSL…STNN. Low complexity-rich tracts occupy residues 875–889, 898–915, and 940–958; these read SESS…ASES, SEST…STVT, and TSDV…PTSA. Over residues 959 to 969 the composition is skewed to polar residues; that stretch reads EQSITDNPNID. Positions 996–1021 are enriched in low complexity; the sequence is SETSTLSSDDSTSSDTSISSTTNSDT. Polar residues-rich tracts occupy residues 1022–1040 and 1085–1107; these read GNIN…KESS and PNTF…SVLS. 2 stretches are compositionally biased toward low complexity: residues 1121–1130 and 1158–1177; these read VTDTTTVSSV and ETSL…SSGT. 2 stretches are compositionally biased toward polar residues: residues 1192 to 1202 and 1209 to 1218; these read TSTDNRLSYST and TYANSGSTNN. An N-linked (GlcNAc...) asparagine glycan is attached at Asn-1273. Ser-1345 is lipidated: GPI-anchor amidated serine. Positions 1346–1366 are cleaved as a propeptide — removed in mature form; sequence SATKHPSWLLKFISVALFFFL.

Belongs to the ALS family. The GPI-anchor is attached to the protein in the endoplasmic reticulum and serves to target the protein to the cell surface. There, the glucosamine-inositol phospholipid moiety is cleaved off and the GPI-modified mannoprotein is covalently attached via its lipidless GPI glycan remnant to the 1,6-beta-glucan of the outer cell wall layer.

Its subcellular location is the cell membrane. The protein localises to the secreted. It localises to the cell wall. Functionally, cell surface adhesion protein which mediates both yeast-to-host tissue adherence and yeast aggregation. Plays an important role in the pathogenesis of C.albicans infections. This chain is Agglutinin-like protein 6 (ALS6), found in Candida albicans (strain SC5314 / ATCC MYA-2876) (Yeast).